We begin with the raw amino-acid sequence, 393 residues long: Major outer membrane porin, serovar D (393 aa).

The signal sequence occupies residues 1-22 (MKKLLKSVLVFAALSSASSLQA).

The protein belongs to the chlamydial porin (CP) (TC 1.B.2) family. As to quaternary structure, part of a disulfide cross-linked outer membrane complex (COMC) composed of the major outer membrane porin (MOMP), the small cysteine-rich protein (OmcA) and the large cysteine-rich periplasmic protein (OmcB).

Its subcellular location is the cell outer membrane. Functionally, in elementary bodies (EBs, the infectious stage, which is able to survive outside the host cell) provides the structural integrity of the outer envelope through disulfide cross-links with the small cysteine-rich protein and the large cysteine-rich periplasmic protein. It has been described in publications as the Sarkosyl-insoluble COMC (Chlamydia outer membrane complex), and serves as the functional equivalent of peptidoglycan. Permits diffusion of specific solutes through the outer membrane. The protein is Major outer membrane porin, serovar D (ompA) of Chlamydia trachomatis serovar D (strain ATCC VR-885 / DSM 19411 / UW-3/Cx).